Reading from the N-terminus, the 315-residue chain is MTTHRNDTLSTEASDFLLNCFVRSPSWQHWLSLPLSLLFLLAVGANTTLLMTIWLEASLHQPLYYLLSLLSLLDIVLCLTVIPKVLTIFWFDLRPISFPACFLQMYIMNCFLAMESCTFMVMAYDRYVAICHPLRYPSIITDHFVVKAAMFILTRNVLMTLPIPILSAQLRYCGRNVIENCICANMSVSRLSCDDVTINHLYQFAGGWTLLGSDLILIFLSYTFILRAVLRLKAEGAVAKALSTCGSHFMLILFFSTILLVFVLTHVAKKKVSPDVPVLLNVLHHVIPAALNPIIYGVRTQEIKQGMQRLLKKGC.

At 1–29 (MTTHRNDTLSTEASDFLLNCFVRSPSWQH) the chain is on the extracellular side. N-linked (GlcNAc...) asparagine glycosylation occurs at Asn6. A helical membrane pass occupies residues 30 to 50 (WLSLPLSLLFLLAVGANTTLL). The Cytoplasmic segment spans residues 51–58 (MTIWLEAS). A helical transmembrane segment spans residues 59–79 (LHQPLYYLLSLLSLLDIVLCL). Residues 80–103 (TVIPKVLTIFWFDLRPISFPACFL) lie on the Extracellular side of the membrane. An intrachain disulfide couples Cys101 to Cys193. The helical transmembrane segment at 104 to 124 (QMYIMNCFLAMESCTFMVMAY) threads the bilayer. Over 125–143 (DRYVAICHPLRYPSIITDH) the chain is Cytoplasmic. The helical transmembrane segment at 144 to 164 (FVVKAAMFILTRNVLMTLPIP) threads the bilayer. The Extracellular segment spans residues 165-200 (ILSAQLRYCGRNVIENCICANMSVSRLSCDDVTINH). Asn185 carries N-linked (GlcNAc...) asparagine glycosylation. The chain crosses the membrane as a helical span at residues 201-221 (LYQFAGGWTLLGSDLILIFLS). Residues 222–241 (YTFILRAVLRLKAEGAVAKA) are Cytoplasmic-facing. Residues 242–262 (LSTCGSHFMLILFFSTILLVF) form a helical membrane-spanning segment. Residues 263 to 277 (VLTHVAKKKVSPDVP) are Extracellular-facing. A helical membrane pass occupies residues 278–298 (VLLNVLHHVIPAALNPIIYGV). The Cytoplasmic portion of the chain corresponds to 299 to 315 (RTQEIKQGMQRLLKKGC).

It belongs to the G-protein coupled receptor 1 family.

It is found in the cell membrane. Its function is as follows. Odorant receptor. The sequence is that of Olfactory receptor 56A3 (OR56A3) from Homo sapiens (Human).